The following is a 508-amino-acid chain: Photosystem II CP47 reaction center protein (508 aa).

Transmembrane regions (helical) follow at residues 21–36 (SVHI…WAGS), 101–115 (IVFS…IWHW), 140–156 (GIHL…FGAF), 203–218 (IAAG…FHLS), 237–252 (VLSS…AFVV), and 457–472 (SFAL…HGAR).

Belongs to the PsbB/PsbC family. PsbB subfamily. In terms of assembly, PSII is composed of 1 copy each of membrane proteins PsbA, PsbB, PsbC, PsbD, PsbE, PsbF, PsbH, PsbI, PsbJ, PsbK, PsbL, PsbM, PsbT, PsbX, PsbY, PsbZ, Psb30/Ycf12, at least 3 peripheral proteins of the oxygen-evolving complex and a large number of cofactors. It forms dimeric complexes. The cofactor is Binds multiple chlorophylls. PSII binds additional chlorophylls, carotenoids and specific lipids..

Its subcellular location is the plastid. The protein localises to the chloroplast thylakoid membrane. Its function is as follows. One of the components of the core complex of photosystem II (PSII). It binds chlorophyll and helps catalyze the primary light-induced photochemical processes of PSII. PSII is a light-driven water:plastoquinone oxidoreductase, using light energy to abstract electrons from H(2)O, generating O(2) and a proton gradient subsequently used for ATP formation. The sequence is that of Photosystem II CP47 reaction center protein from Ipomoea purpurea (Common morning glory).